Here is a 121-residue protein sequence, read N- to C-terminus: Protein YxiB (121 aa).

This is Protein YxiB (yxiB) from Bacillus subtilis (strain 168).